We begin with the raw amino-acid sequence, 324 residues long: Beta-ketoacyl-[acyl-carrier-protein] synthase III (324 aa).

Residues Cys-112 and His-249 contribute to the active site. Residues 250–254 are ACP-binding; that stretch reads QANDR. The active site involves Asn-279.

This sequence belongs to the thiolase-like superfamily. FabH family. As to quaternary structure, homodimer.

Its subcellular location is the cytoplasm. The enzyme catalyses malonyl-[ACP] + acetyl-CoA + H(+) = 3-oxobutanoyl-[ACP] + CO2 + CoA. It functions in the pathway lipid metabolism; fatty acid biosynthesis. In terms of biological role, catalyzes the condensation reaction of fatty acid synthesis by the addition to an acyl acceptor of two carbons from malonyl-ACP. Catalyzes the first condensation reaction which initiates fatty acid synthesis and may therefore play a role in governing the total rate of fatty acid production. Possesses both acetoacetyl-ACP synthase and acetyl transacylase activities. Its substrate specificity determines the biosynthesis of branched-chain and/or straight-chain of fatty acids. The polypeptide is Beta-ketoacyl-[acyl-carrier-protein] synthase III (Streptococcus gordonii (strain Challis / ATCC 35105 / BCRC 15272 / CH1 / DL1 / V288)).